The following is a 524-amino-acid chain: uncharacterized protein (524 aa).

A helical transmembrane segment spans residues 13-33 (EFILLILGMTVVGIVITMGLV).

The protein resides in the membrane. This is an uncharacterized protein from Methanocaldococcus jannaschii (strain ATCC 43067 / DSM 2661 / JAL-1 / JCM 10045 / NBRC 100440) (Methanococcus jannaschii).